Reading from the N-terminus, the 453-residue chain is O-glucose prenyltransferase PaPT (453 aa).

95 to 96 (AP) is an L-tryptophan binding site. Substrate is bound by residues lysine 210, tyrosine 212, arginine 279, lysine 281, tyrosine 283, tyrosine 368, and tyrosine 435.

The protein belongs to the tryptophan dimethylallyltransferase family.

The protein operates within mycotoxin biosynthesis. In terms of biological role, O-glucose prenyltransferase; part of the 2 gene clusters that mediate the biosynthesis of fusicoccins, diterpene glucosides that display phytohormone-like activity and function as potent activators of plasma membrane H(+)-ATPases in plants by modifying 14-3-3 proteins and cause the plant disease constriction canker. The first step in the pathway is performed by the fusicoccadiene synthase PaFS that possesses both prenyl transferase and terpene cyclase activity, converting isopentenyl diphosphate and dimethylallyl diphosphate into geranylgeranyl diphosphate (GGDP) and successively converting GGDP into fusicocca-2,10(14)-diene, a precursor for fusicoccin H. The second step is the oxidation at the C-8 position by the cytochrome P450 monooxygenase PaP450-2 to yield fusicocca-2,10(14)-diene-8-beta-ol. The cytochrome P450 monooxygenase PaP450-1 then catalyzes the hydroxylation at the C-16 position to produce fusicocca-2,10(14)-diene-8-beta,16-diol. The dioxygenase fc-dox then catalyzes the 16-oxydation of fusicocca-2,10(14)-diene-8-beta,16-diol to yield an aldehyde (8-beta-hydroxyfusicocca-1,10(14)-dien-16-al). The short-chain dehydrogenase/reductase fc-sdr catalyzes the reduction of the aldehyde to yield fusicocca-1,10(14)-diene-8-beta,16-diol. The next step is the hydroxylation at C-9 performed by the cytochrome P450 monooxygenase PaP450-3 that leads to fusicoccin H aglycon which is glycosylated to fusicoccin H by the O-glycosyltransferase PaGT. Hydroxylation at C-12 by the cytochrome P450 monooxygenase PaP450-4 leads then to the production of fusicoccin Q and is followed by methylation by the O-methyltransferase PaMT to yield fusicoccin P. Fusicoccin P is further converted to fusicoccin J via prenylation by the O-glucose prenyltransferase PaPT. Cytochrome P450 monooxygenase PaP450-5 then performs hydroxylation at C-19 to yield dideacetyl-fusicoccin A which is acetylated to 3'-O-deacetyl-fusicoccin A by the O-acetyltransferase PaAT-2. Finally, a another acetylation by the O-acetyltransferase PaAT-1 yields fusicoccin A. This Phomopsis amygdali (Fusicoccum amygdali) protein is O-glucose prenyltransferase PaPT.